Consider the following 358-residue polypeptide: 3-dehydroquinate synthase (358 aa).

Residues 102–106 (GVVGD), 126–127 (TT), lysine 139, and lysine 148 each bind NAD(+). Zn(2+) is bound by residues glutamate 181, histidine 244, and histidine 260.

Belongs to the sugar phosphate cyclases superfamily. Dehydroquinate synthase family. It depends on Co(2+) as a cofactor. Requires Zn(2+) as cofactor. The cofactor is NAD(+).

It localises to the cytoplasm. The enzyme catalyses 7-phospho-2-dehydro-3-deoxy-D-arabino-heptonate = 3-dehydroquinate + phosphate. It functions in the pathway metabolic intermediate biosynthesis; chorismate biosynthesis; chorismate from D-erythrose 4-phosphate and phosphoenolpyruvate: step 2/7. Its function is as follows. Catalyzes the conversion of 3-deoxy-D-arabino-heptulosonate 7-phosphate (DAHP) to dehydroquinate (DHQ). The protein is 3-dehydroquinate synthase of Symbiobacterium thermophilum (strain DSM 24528 / JCM 14929 / IAM 14863 / T).